Consider the following 759-residue polypeptide: Arylphorin subunit A4 (759 aa).

The signal sequence occupies residues 1–16 (MKIAIVLLAIIALVAA).

Belongs to the hemocyanin family. Heterohexamer. As to expression, fat body.

It is found in the secreted. The protein resides in the extracellular space. Arylphorin is a larval storage protein (LSP) which may serve as a storage protein used primarily as a source of aromatic amino acids for protein synthesis during metamorphosis. It is a constituent of the sclerotizing system of the cuticle, and serves as a carrier for ecdysteroid hormone. This chain is Arylphorin subunit A4, found in Calliphora vicina (Blue blowfly).